Consider the following 179-residue polypeptide: Acireductone dioxygenase (179 aa).

Residues 1–23 (MVQAWYMDESTADPRMPHRAQPD) are disordered. The Fe(2+) site is built by His-88, His-90, Glu-94, and His-133. Ni(2+) contacts are provided by His-88, His-90, Glu-94, and His-133.

The protein belongs to the acireductone dioxygenase (ARD) family. Monomer. Interacts with MMP14. It depends on Fe(2+) as a cofactor. Ni(2+) serves as cofactor. As to expression, detected in prostate, liver, heart, brain, muscle, kidney and seminal vesicles.

It is found in the cytoplasm. The protein resides in the nucleus. The protein localises to the cell membrane. The enzyme catalyses 1,2-dihydroxy-5-(methylsulfanyl)pent-1-en-3-one + O2 = 4-methylsulfanyl-2-oxobutanoate + formate + 2 H(+). It catalyses the reaction 1,2-dihydroxy-5-(methylsulfanyl)pent-1-en-3-one + O2 = 3-(methylsulfanyl)propanoate + CO + formate + 2 H(+). It participates in amino-acid biosynthesis; L-methionine biosynthesis via salvage pathway; L-methionine from S-methyl-5-thio-alpha-D-ribose 1-phosphate: step 5/6. Its function is as follows. Catalyzes 2 different reactions between oxygen and the acireductone 1,2-dihydroxy-3-keto-5-methylthiopentene (DHK-MTPene) depending upon the metal bound in the active site. Fe-containing acireductone dioxygenase (Fe-ARD) produces formate and 2-keto-4-methylthiobutyrate (KMTB), the alpha-ketoacid precursor of methionine in the methionine recycle pathway. Ni-containing acireductone dioxygenase (Ni-ARD) produces methylthiopropionate, carbon monoxide and formate, and does not lie on the methionine recycle pathway. Also down-regulates cell migration mediated by MMP14. This chain is Acireductone dioxygenase (Adi1), found in Rattus norvegicus (Rat).